The sequence spans 88 residues: Small ribosomal subunit protein bS20 (88 aa).

This sequence belongs to the bacterial ribosomal protein bS20 family.

Binds directly to 16S ribosomal RNA. This chain is Small ribosomal subunit protein bS20, found in Renibacterium salmoninarum (strain ATCC 33209 / DSM 20767 / JCM 11484 / NBRC 15589 / NCIMB 2235).